A 51-amino-acid chain; its full sequence is Large ribosomal subunit protein bL33 (51 aa).

Residues 1–21 (MRDKIKLESGAGTGHFYTTTK) form a disordered region.

Belongs to the bacterial ribosomal protein bL33 family.

The sequence is that of Large ribosomal subunit protein bL33 from Neisseria gonorrhoeae (strain ATCC 700825 / FA 1090).